A 235-amino-acid chain; its full sequence is uncharacterized protein (235 aa).

An N-acetyltransferase domain is found at 82-221; the sequence is LAFKKFPPDP…DTGELIRESP (140 aa).

Belongs to the acetyltransferase family.

It is found in the golgi apparatus membrane. It localises to the endoplasmic reticulum membrane. This is an uncharacterized protein from Schizosaccharomyces pombe (strain 972 / ATCC 24843) (Fission yeast).